Reading from the N-terminus, the 200-residue chain is LHFPL tetraspan subfamily member 6 protein (200 aa).

The signal sequence occupies residues 1 to 21 (MASSLTCAGVIWALLSFLCAA). A run of 2 helical transmembrane segments spans residues 84–104 (ICTVVTGIGCGLLLLVALTAI) and 123–143 (GIQFVGGLLIGSGCALYPLGW). Asn154 carries N-linked (GlcNAc...) asparagine glycosylation. Residues 172–192 (CTGAGAAAAMVLCTWMACFAG) traverse the membrane as a helical segment.

It belongs to the LHFP family.

It is found in the membrane. The protein is LHFPL tetraspan subfamily member 6 protein of Danio rerio (Zebrafish).